The sequence spans 596 residues: MKHIRNFSIIAHIDHGKSTLSDRLIQVCGGLTDREMDSQVLDSMDLERERGITIKAQSVTLDYKAKDGQVYQLNFIDTPGHVDFSYEVSRSLAACEGALLVVDAGQGVEAQTLANCYTALDMNLDVVPILNKIDLPQADPERVAAEIEDIVGIDAMDAVRCSAKTGVGVDDVLEVIVAKIPPPEGDPDAPLQALIIDSWFDNYLGVVSLVRIKHGSLKKGDKFKVMSTGQNHTADRVGIFTPKQTDKTELKTGEVGFVIAGLKEIHGAPVGDTLTLAKNGADKPLPGFKKVKPQVYAGVFPISTDEYENFRDALNKLSLNDASLFFEPESSSALGFGFRIGYLGLLHMEIVQERLEREYNLELITTAPTVVYEVVMTNGETIYVDNPSDLPAINNIEEMREPIVEANILVPKEYLGNVITLCIEKRGTQVNMVYHGNQVAVTYHLPMAEVVMDFFDRLKSTSRGYASLEYNFIRFDPADMVRLDILINGDRVDALAMVIHRSNIRHRGLALVEKMKELIPRQMFDIAIQAAVGSQIIARSTVKALRKDVTAKCYGGDVSRKKKLLNKQKEGKKRMKQVGNVEVPQEAFLAVLKLNE.

A tr-type G domain is found at 2 to 184 (KHIRNFSIIA…VIVAKIPPPE (183 aa)). Residues 14 to 19 (DHGKST) and 131 to 134 (NKID) contribute to the GTP site.

This sequence belongs to the TRAFAC class translation factor GTPase superfamily. Classic translation factor GTPase family. LepA subfamily.

The protein resides in the cell inner membrane. It carries out the reaction GTP + H2O = GDP + phosphate + H(+). Required for accurate and efficient protein synthesis under certain stress conditions. May act as a fidelity factor of the translation reaction, by catalyzing a one-codon backward translocation of tRNAs on improperly translocated ribosomes. Back-translocation proceeds from a post-translocation (POST) complex to a pre-translocation (PRE) complex, thus giving elongation factor G a second chance to translocate the tRNAs correctly. Binds to ribosomes in a GTP-dependent manner. In Shewanella putrefaciens (strain CN-32 / ATCC BAA-453), this protein is Elongation factor 4.